The primary structure comprises 226 residues: 2-C-methyl-D-erythritol 4-phosphate cytidylyltransferase (226 aa).

This sequence belongs to the IspD/TarI cytidylyltransferase family. IspD subfamily.

The catalysed reaction is 2-C-methyl-D-erythritol 4-phosphate + CTP + H(+) = 4-CDP-2-C-methyl-D-erythritol + diphosphate. The protein operates within isoprenoid biosynthesis; isopentenyl diphosphate biosynthesis via DXP pathway; isopentenyl diphosphate from 1-deoxy-D-xylulose 5-phosphate: step 2/6. Its function is as follows. Catalyzes the formation of 4-diphosphocytidyl-2-C-methyl-D-erythritol from CTP and 2-C-methyl-D-erythritol 4-phosphate (MEP). The chain is 2-C-methyl-D-erythritol 4-phosphate cytidylyltransferase from Actinobacillus pleuropneumoniae serotype 7 (strain AP76).